A 262-amino-acid polypeptide reads, in one-letter code: Phosphatidylserine decarboxylase proenzyme (262 aa).

Residues Asp-86, His-142, and Ser-226 each act as charge relay system; for autoendoproteolytic cleavage activity in the active site. Ser-226 (schiff-base intermediate with substrate; via pyruvic acid; for decarboxylase activity) is an active-site residue. Ser-226 carries the pyruvic acid (Ser); by autocatalysis modification.

Belongs to the phosphatidylserine decarboxylase family. PSD-B subfamily. Prokaryotic type I sub-subfamily. In terms of assembly, heterodimer of a large membrane-associated beta subunit and a small pyruvoyl-containing alpha subunit. The cofactor is pyruvate. In terms of processing, is synthesized initially as an inactive proenzyme. Formation of the active enzyme involves a self-maturation process in which the active site pyruvoyl group is generated from an internal serine residue via an autocatalytic post-translational modification. Two non-identical subunits are generated from the proenzyme in this reaction, and the pyruvate is formed at the N-terminus of the alpha chain, which is derived from the carboxyl end of the proenzyme. The autoendoproteolytic cleavage occurs by a canonical serine protease mechanism, in which the side chain hydroxyl group of the serine supplies its oxygen atom to form the C-terminus of the beta chain, while the remainder of the serine residue undergoes an oxidative deamination to produce ammonia and the pyruvoyl prosthetic group on the alpha chain. During this reaction, the Ser that is part of the protease active site of the proenzyme becomes the pyruvoyl prosthetic group, which constitutes an essential element of the active site of the mature decarboxylase.

The protein resides in the cell membrane. It catalyses the reaction a 1,2-diacyl-sn-glycero-3-phospho-L-serine + H(+) = a 1,2-diacyl-sn-glycero-3-phosphoethanolamine + CO2. The protein operates within phospholipid metabolism; phosphatidylethanolamine biosynthesis; phosphatidylethanolamine from CDP-diacylglycerol: step 2/2. In terms of biological role, catalyzes the formation of phosphatidylethanolamine (PtdEtn) from phosphatidylserine (PtdSer). The protein is Phosphatidylserine decarboxylase proenzyme of Bacillus mycoides (strain KBAB4) (Bacillus weihenstephanensis).